Here is a 120-residue protein sequence, read N- to C-terminus: Glutamate--tRNA ligase (120 aa).

This sequence belongs to the class-I aminoacyl-tRNA synthetase family. Glutamate--tRNA ligase type 1 subfamily. As to quaternary structure, monomer.

It is found in the cytoplasm. It catalyses the reaction tRNA(Glu) + L-glutamate + ATP = L-glutamyl-tRNA(Glu) + AMP + diphosphate. In terms of biological role, catalyzes the attachment of glutamate to tRNA(Glu) in a two-step reaction: glutamate is first activated by ATP to form Glu-AMP and then transferred to the acceptor end of tRNA(Glu). The sequence is that of Glutamate--tRNA ligase (gltX) from Staphylococcus xylosus.